Consider the following 76-residue polypeptide: ATP synthase subunit c (76 aa).

A run of 2 helical transmembrane segments spans residues 7 to 27 and 50 to 70; these read VATALAVGLGAIGPGVGIGII and FIGIAFTEALAIFGLVIAFLI.

This sequence belongs to the ATPase C chain family. F-type ATPases have 2 components, F(1) - the catalytic core - and F(0) - the membrane proton channel. F(1) has five subunits: alpha(3), beta(3), gamma(1), delta(1), epsilon(1). F(0) has four main subunits: a(1), b(1), b'(1) and c(10-14). The alpha and beta chains form an alternating ring which encloses part of the gamma chain. F(1) is attached to F(0) by a central stalk formed by the gamma and epsilon chains, while a peripheral stalk is formed by the delta, b and b' chains.

The protein resides in the cell membrane. In terms of biological role, f(1)F(0) ATP synthase produces ATP from ADP in the presence of a proton or sodium gradient. F-type ATPases consist of two structural domains, F(1) containing the extramembraneous catalytic core and F(0) containing the membrane proton channel, linked together by a central stalk and a peripheral stalk. During catalysis, ATP synthesis in the catalytic domain of F(1) is coupled via a rotary mechanism of the central stalk subunits to proton translocation. Key component of the F(0) channel; it plays a direct role in translocation across the membrane. A homomeric c-ring of between 10-14 subunits forms the central stalk rotor element with the F(1) delta and epsilon subunits. This is ATP synthase subunit c from Chloroflexus aurantiacus (strain ATCC 29366 / DSM 635 / J-10-fl).